Here is a 416-residue protein sequence, read N- to C-terminus: Heat shock protein DDB_G0280215 (416 aa).

Residues 37–150 (SMDWGWKPRM…SQHISLFGRE (114 aa)) enclose the sHSP domain. Residues 216-235 (ETKERERRIRDTKGETEKKK) are disordered.

It belongs to the small heat shock protein (HSP20) family.

The polypeptide is Heat shock protein DDB_G0280215 (Dictyostelium discoideum (Social amoeba)).